A 204-amino-acid chain; its full sequence is tRNA (guanine-N(7)-)-methyltransferase (204 aa).

Positions 36, 61, and 111 each coordinate S-adenosyl-L-methionine. Asp111 is a catalytic residue. Residues Lys115, Asp147, and 177–180 (TRFE) contribute to the substrate site.

It belongs to the class I-like SAM-binding methyltransferase superfamily. TrmB family.

It carries out the reaction guanosine(46) in tRNA + S-adenosyl-L-methionine = N(7)-methylguanosine(46) in tRNA + S-adenosyl-L-homocysteine. It functions in the pathway tRNA modification; N(7)-methylguanine-tRNA biosynthesis. Functionally, catalyzes the formation of N(7)-methylguanine at position 46 (m7G46) in tRNA. This is tRNA (guanine-N(7)-)-methyltransferase from Chlorobium phaeobacteroides (strain DSM 266 / SMG 266 / 2430).